Consider the following 381-residue polypeptide: Alkanesulfonate monooxygenase (381 aa).

Belongs to the SsuD family. Homotetramer.

It carries out the reaction an alkanesulfonate + FMNH2 + O2 = an aldehyde + FMN + sulfite + H2O + 2 H(+). Its function is as follows. Catalyzes the desulfonation of aliphatic sulfonates. This Citrobacter koseri (strain ATCC BAA-895 / CDC 4225-83 / SGSC4696) protein is Alkanesulfonate monooxygenase.